The primary structure comprises 394 residues: Elongation factor Tu (394 aa).

Residues 10–204 (KPHVNIGTIG…AVDSYIPQPV (195 aa)) enclose the tr-type G domain. Residues 19-26 (GHVDHGKT) form a G1 region. 19–26 (GHVDHGKT) provides a ligand contact to GTP. Mg(2+) is bound at residue T26. A G2 region spans residues 60–64 (GITIS). A G3 region spans residues 81–84 (DCPG). GTP is bound by residues 81–85 (DCPGH) and 136–139 (NKVD). Residues 136–139 (NKVD) form a G4 region. Residues 174-176 (SAL) form a G5 region.

Belongs to the TRAFAC class translation factor GTPase superfamily. Classic translation factor GTPase family. EF-Tu/EF-1A subfamily. In terms of assembly, monomer.

It localises to the cytoplasm. It carries out the reaction GTP + H2O = GDP + phosphate + H(+). Functionally, GTP hydrolase that promotes the GTP-dependent binding of aminoacyl-tRNA to the A-site of ribosomes during protein biosynthesis. The chain is Elongation factor Tu from Rickettsia rhipicephali.